The chain runs to 416 residues: Tyrosine--tRNA ligase (416 aa).

Position 37 (Tyr-37) interacts with L-tyrosine. Positions 42–51 (PTADSLHVGN) match the 'HIGH' region motif. Residues Tyr-176 and Gln-180 each coordinate L-tyrosine. The 'KMSKS' region signature appears at 236–240 (KMGKS). Lys-239 provides a ligand contact to ATP. One can recognise an S4 RNA-binding domain in the interval 350–416 (LPAFRVFQEA…KKKHILLRPV (67 aa)).

This sequence belongs to the class-I aminoacyl-tRNA synthetase family. TyrS type 1 subfamily. As to quaternary structure, homodimer.

The protein localises to the cytoplasm. It carries out the reaction tRNA(Tyr) + L-tyrosine + ATP = L-tyrosyl-tRNA(Tyr) + AMP + diphosphate + H(+). Its function is as follows. Catalyzes the attachment of tyrosine to tRNA(Tyr) in a two-step reaction: tyrosine is first activated by ATP to form Tyr-AMP and then transferred to the acceptor end of tRNA(Tyr). In Gluconobacter oxydans (strain 621H) (Gluconobacter suboxydans), this protein is Tyrosine--tRNA ligase.